The chain runs to 654 residues: Fructose-1,6-bisphosphatase class 3 (654 aa).

The tract at residues 288–307 (NPAFKPKKRPDKHERLTQRE) is disordered. A compositionally biased stretch (basic and acidic residues) spans 298–307 (DKHERLTQRE).

The protein belongs to the FBPase class 3 family. The cofactor is Mn(2+).

It catalyses the reaction beta-D-fructose 1,6-bisphosphate + H2O = beta-D-fructose 6-phosphate + phosphate. Its pathway is carbohydrate biosynthesis; gluconeogenesis. The chain is Fructose-1,6-bisphosphatase class 3 from Staphylococcus aureus (strain MRSA252).